Here is a 456-residue protein sequence, read N- to C-terminus: Exodeoxyribonuclease 7 large subunit (456 aa).

It belongs to the XseA family. As to quaternary structure, heterooligomer composed of large and small subunits.

It localises to the cytoplasm. The catalysed reaction is Exonucleolytic cleavage in either 5'- to 3'- or 3'- to 5'-direction to yield nucleoside 5'-phosphates.. Its function is as follows. Bidirectionally degrades single-stranded DNA into large acid-insoluble oligonucleotides, which are then degraded further into small acid-soluble oligonucleotides. The chain is Exodeoxyribonuclease 7 large subunit from Shigella boydii serotype 18 (strain CDC 3083-94 / BS512).